Consider the following 90-residue polypeptide: Non-structural protein NS-S (90 aa).

The tract at residues 4 to 29 is nucleolar signal; the sequence is KLSLPGKNLKMQKRRWKPTRMMLTRA.

It belongs to the hantavirus NS-S protein family. Interacts with host MAVS; this interaction may reduce MAVS ubiquitination.

It localises to the host cytoplasm. Its subcellular location is the host perinuclear region. The protein localises to the host nucleus. Antagonizes host type-I IFN signaling pathway. The protein is Non-structural protein NS-S (N) of Homo sapiens (Human).